The chain runs to 388 residues: Succinate--CoA ligase [ADP-forming] subunit beta (388 aa).

The ATP-grasp domain maps to 9–243; that stretch reads KQLFHRYGIP…ESQLAPLEVR (235 aa). ATP is bound by residues Lys45, 52-54, Glu98, Val101, and Glu106; that span reads GRG. Mg(2+) is bound by residues Asn198 and Asp212. Substrate contacts are provided by residues Asn263 and 320-322; that span reads GIM.

It belongs to the succinate/malate CoA ligase beta subunit family. Heterotetramer of two alpha and two beta subunits. Mg(2+) is required as a cofactor.

It catalyses the reaction succinate + ATP + CoA = succinyl-CoA + ADP + phosphate. The catalysed reaction is GTP + succinate + CoA = succinyl-CoA + GDP + phosphate. Its pathway is carbohydrate metabolism; tricarboxylic acid cycle; succinate from succinyl-CoA (ligase route): step 1/1. Functionally, succinyl-CoA synthetase functions in the citric acid cycle (TCA), coupling the hydrolysis of succinyl-CoA to the synthesis of either ATP or GTP and thus represents the only step of substrate-level phosphorylation in the TCA. The beta subunit provides nucleotide specificity of the enzyme and binds the substrate succinate, while the binding sites for coenzyme A and phosphate are found in the alpha subunit. The polypeptide is Succinate--CoA ligase [ADP-forming] subunit beta (Syntrophotalea carbinolica (strain DSM 2380 / NBRC 103641 / GraBd1) (Pelobacter carbinolicus)).